The chain runs to 72 residues: MSLEILDQLEEKIKQAVETIQLLQLEIDELKEKNNQSQQANDALRSENEQLKSEHQNWQERLRSLLGKIDNV.

Residues 1 to 72 (MSLEILDQLE…RSLLGKIDNV (72 aa)) are a coiled coil. The segment at 33 to 57 (KNNQSQQANDALRSENEQLKSEHQN) is disordered. Over residues 44–57 (LRSENEQLKSEHQN) the composition is skewed to basic and acidic residues.

This sequence belongs to the ZapB family. As to quaternary structure, homodimer. The ends of the coiled-coil dimer bind to each other, forming polymers. Interacts with FtsZ.

It is found in the cytoplasm. In terms of biological role, non-essential, abundant cell division factor that is required for proper Z-ring formation. It is recruited early to the divisome by direct interaction with FtsZ, stimulating Z-ring assembly and thereby promoting cell division earlier in the cell cycle. Its recruitment to the Z-ring requires functional FtsA or ZipA. This chain is Cell division protein ZapB, found in Pasteurella multocida (strain Pm70).